A 91-amino-acid polypeptide reads, in one-letter code: Elongation factor 1-beta (91 aa).

The protein belongs to the EF-1-beta/EF-1-delta family.

In terms of biological role, promotes the exchange of GDP for GTP in EF-1-alpha/GDP, thus allowing the regeneration of EF-1-alpha/GTP that could then be used to form the ternary complex EF-1-alpha/GTP/AAtRNA. The protein is Elongation factor 1-beta of Caldivirga maquilingensis (strain ATCC 700844 / DSM 13496 / JCM 10307 / IC-167).